Consider the following 213-residue polypeptide: Orotate phosphoribosyltransferase (213 aa).

Residue K26 participates in 5-phospho-alpha-D-ribose 1-diphosphate binding. 34–35 is an orotate binding site; that stretch reads FF. 5-phospho-alpha-D-ribose 1-diphosphate is bound by residues 72 to 73, R99, K100, K103, H105, and 124 to 132; these read YK and DDVITAGTA. Orotate-binding residues include T128 and R156.

It belongs to the purine/pyrimidine phosphoribosyltransferase family. PyrE subfamily. Homodimer. It depends on Mg(2+) as a cofactor.

The catalysed reaction is orotidine 5'-phosphate + diphosphate = orotate + 5-phospho-alpha-D-ribose 1-diphosphate. Its pathway is pyrimidine metabolism; UMP biosynthesis via de novo pathway; UMP from orotate: step 1/2. In terms of biological role, catalyzes the transfer of a ribosyl phosphate group from 5-phosphoribose 1-diphosphate to orotate, leading to the formation of orotidine monophosphate (OMP). This is Orotate phosphoribosyltransferase from Salmonella typhi.